Here is a 129-residue protein sequence, read N- to C-terminus: Small ribosomal subunit protein uS9 (129 aa).

Residues 107–129 (SRVVERKKPGKKKARRSPQFSKR) are disordered. The segment covering 114 to 129 (KPGKKKARRSPQFSKR) has biased composition (basic residues).

This sequence belongs to the universal ribosomal protein uS9 family.

This Sulfurovum sp. (strain NBC37-1) protein is Small ribosomal subunit protein uS9.